The sequence spans 264 residues: Phosphoribosylaminoimidazole-succinocarboxamide synthase (264 aa).

It belongs to the SAICAR synthetase family.

The catalysed reaction is 5-amino-1-(5-phospho-D-ribosyl)imidazole-4-carboxylate + L-aspartate + ATP = (2S)-2-[5-amino-1-(5-phospho-beta-D-ribosyl)imidazole-4-carboxamido]succinate + ADP + phosphate + 2 H(+). Its pathway is purine metabolism; IMP biosynthesis via de novo pathway; 5-amino-1-(5-phospho-D-ribosyl)imidazole-4-carboxamide from 5-amino-1-(5-phospho-D-ribosyl)imidazole-4-carboxylate: step 1/2. The protein is Phosphoribosylaminoimidazole-succinocarboxamide synthase (purC) of Synechocystis sp. (strain ATCC 27184 / PCC 6803 / Kazusa).